A 149-amino-acid chain; its full sequence is Calmodulin (149 aa).

Alanine 2 carries the N-acetylalanine modification. 4 EF-hand domains span residues 8 to 43 (EQIA…LGQN), 44 to 79 (PTEA…KMKD), 81 to 116 (DSEE…LGEK), and 117 to 149 (LTDE…MTNK). Residues aspartate 21, aspartate 23, aspartate 25, threonine 27, glutamate 32, aspartate 57, aspartate 59, asparagine 61, threonine 63, glutamate 68, aspartate 94, aspartate 96, asparagine 98, and glutamate 105 each contribute to the Ca(2+) site. An N6,N6,N6-trimethyllysine modification is found at lysine 116. Ca(2+)-binding residues include aspartate 130, aspartate 132, aspartate 134, glutamine 136, and glutamate 141.

The protein belongs to the calmodulin family.

Functionally, calmodulin mediates the control of a large number of enzymes, ion channels and other proteins by Ca(2+). Among the enzymes to be stimulated by the calmodulin-Ca(2+) complex are a number of protein kinases and phosphatases. In Ciona intestinalis (Transparent sea squirt), this protein is Calmodulin.